A 263-amino-acid polypeptide reads, in one-letter code: Mediator of RNA polymerase II transcription subunit 7 (263 aa).

Over residues 1-10 (MADAAQQRTL) the composition is skewed to polar residues. Disordered regions lie at residues 1 to 57 (MADA…PAEL), 101 to 122 (ITQLYPSSSPADTDRQSPSEPS), and 222 to 247 (GIAAQSHPQQTDEDGRKESETSQKTI). Residues 24–47 (FTPDNLKRLEEIKKEASKGEDGKP) are compositionally biased toward basic and acidic residues. The span at 101-111 (ITQLYPSSSPA) shows a compositional bias: polar residues. Basic and acidic residues predominate over residues 234-247 (EDGRKESETSQKTI).

Belongs to the Mediator complex subunit 7 family. Component of the Mediator complex.

Its subcellular location is the nucleus. Its function is as follows. Component of the Mediator complex, a coactivator involved in the regulated transcription of nearly all RNA polymerase II-dependent genes. Mediator functions as a bridge to convey information from gene-specific regulatory proteins to the basal RNA polymerase II transcription machinery. Mediator is recruited to promoters by direct interactions with regulatory proteins and serves as a scaffold for the assembly of a functional preinitiation complex with RNA polymerase II and the general transcription factors. The polypeptide is Mediator of RNA polymerase II transcription subunit 7 (med7) (Aspergillus niger (strain ATCC MYA-4892 / CBS 513.88 / FGSC A1513)).